We begin with the raw amino-acid sequence, 301 residues long: Tegument protein VP22 (301 aa).

The interval 1–171 (MTSRRSVKSG…PTRSKTPAQG (171 aa)) is disordered. A compositionally biased stretch (low complexity) spans 113 to 124 (RTPTTAPRAPRT). The short motif at 163–166 (TRSK) is the Nuclear localization signal element. The segment at 174–267 (RKLHFSTAPP…LVNPDVVQDV (94 aa)) is interaction with gE. The Nuclear export signal motif lies at 232–244 (LNELLGITTIRVT). A compositionally biased stretch (low complexity) spans 269–281 (AATATRGRSAASR). Positions 269-301 (AATATRGRSAASRPTERPRAPARSASRPRRPVE) are disordered.

The protein belongs to the alphaherpesvirinae VP22 tegument protein family. As to quaternary structure, interacts with gE (via C-terminus); this interaction is necessary for the recruitment of VP22 to the Golgi and its packaging into virions. Interacts with gM (via C-terminus). Interacts with VP16; this interaction allows the formation of a tripartite complex composed of VP16, VP22 and UL41/VHS. According to a report interacts with gD (via C-terminus). According another publication, does not interact with gD. Interacts with host CGAS. Interacts with host SET; this interaction may interfere with SET-mediated nucleosomal deposition onto the viral genome. Interacts with the capsid-binding protein UL16. Highly phosphorylated in the host cell. Packaging is selective for underphosphorylated forms.

Its subcellular location is the virion tegument. The protein localises to the host cytoplasm. The protein resides in the host nucleus. It is found in the host Golgi apparatus. Its function is as follows. Tegument protein that plays different roles during the time course of infection. Participates in both the accumulation of viral mRNAs and viral protein translation at late time of infection. Modulates the RNase activity of the virion host shutoff protein UL41 probably to ensure necessary levels of key cellular mRNAs and proteins. Plays a role in microtubule reorganization that occurs after viral infection by stabilizing microtubule network. Finally, may prevent nucleosomal deposition onto the viral genome by interacting with and inhibiting host SET. Plays a role in the inhibition of host innate immune system by targeting the CGAS enzymatic activity which is the principal cytosolic DNA sensor that detects invading viral DNA. Acts by mediating disruption of liquid-like droplets in which CGAS is activated, thereby preventing CGAS activity. The protein is Tegument protein VP22 of Human herpesvirus 1 (strain 17) (HHV-1).